Reading from the N-terminus, the 576-residue chain is 2-succinyl-5-enolpyruvyl-6-hydroxy-3-cyclohexene-1-carboxylate synthase (576 aa).

Belongs to the TPP enzyme family. MenD subfamily. As to quaternary structure, homodimer. Mg(2+) serves as cofactor. Requires Mn(2+) as cofactor. It depends on thiamine diphosphate as a cofactor.

The enzyme catalyses isochorismate + 2-oxoglutarate + H(+) = 5-enolpyruvoyl-6-hydroxy-2-succinyl-cyclohex-3-ene-1-carboxylate + CO2. It functions in the pathway quinol/quinone metabolism; 1,4-dihydroxy-2-naphthoate biosynthesis; 1,4-dihydroxy-2-naphthoate from chorismate: step 2/7. Its pathway is quinol/quinone metabolism; menaquinone biosynthesis. Catalyzes the thiamine diphosphate-dependent decarboxylation of 2-oxoglutarate and the subsequent addition of the resulting succinic semialdehyde-thiamine pyrophosphate anion to isochorismate to yield 2-succinyl-5-enolpyruvyl-6-hydroxy-3-cyclohexene-1-carboxylate (SEPHCHC). The polypeptide is 2-succinyl-5-enolpyruvyl-6-hydroxy-3-cyclohexene-1-carboxylate synthase (Photobacterium profundum (strain SS9)).